Here is a 274-residue protein sequence, read N- to C-terminus: Type II restriction enzyme HgiBI (274 aa).

It belongs to the TdeIII type II restriction endonuclease family.

It catalyses the reaction Endonucleolytic cleavage of DNA to give specific double-stranded fragments with terminal 5'-phosphates.. A P subtype restriction enzyme that recognizes the double-stranded sequence 5'-GGWCC-3' and cleaves after G-1. This system is less active than isoschizomeric RM.HgiEI. The sequence is that of Type II restriction enzyme HgiBI from Herpetosiphon aurantiacus (Herpetosiphon giganteus).